The chain runs to 322 residues: Transmembrane protein 171 (322 aa).

The next 4 helical transmembrane spans lie at 22–42 (IFFLFVFGAALLCVGVLLSIF), 57–77 (IVLKIAGPSCAVVGLGAVILA), 112–132 (LIFGFLFLTSGMLISILGIWV), and 159–179 (FLSLQIMGPLVVLVGLCFFVV). A disordered region spans residues 223–322 (PPPYFPESSA…LGAPSDASPP (100 aa)). Over residues 228 to 241 (PESSAAAPSPGANS) the composition is skewed to low complexity. Polar residues-rich tracts occupy residues 242–267 (LHQIENPPSYSSLFNYGTPTPENQGA) and 279–289 (ISGQGSSSERS).

It localises to the membrane. The polypeptide is Transmembrane protein 171 (Tmem171) (Mus musculus (Mouse)).